Reading from the N-terminus, the 227-residue chain is ATP-dependent dethiobiotin synthetase BioD (227 aa).

13–18 (DVGKTV) lines the ATP pocket. Thr-17 contributes to the Mg(2+) binding site. Lys-38 is a catalytic residue. ATP-binding positions include Asp-55, 116 to 119 (EGAG), 176 to 177 (NR), and 205 to 207 (PYI). Mg(2+) is bound by residues Asp-55 and Glu-116.

It belongs to the dethiobiotin synthetase family. As to quaternary structure, homodimer. The cofactor is Mg(2+).

The protein localises to the cytoplasm. The catalysed reaction is (7R,8S)-7,8-diammoniononanoate + CO2 + ATP = (4R,5S)-dethiobiotin + ADP + phosphate + 3 H(+). The protein operates within cofactor biosynthesis; biotin biosynthesis; biotin from 7,8-diaminononanoate: step 1/2. Functionally, catalyzes a mechanistically unusual reaction, the ATP-dependent insertion of CO2 between the N7 and N8 nitrogen atoms of 7,8-diaminopelargonic acid (DAPA, also called 7,8-diammoniononanoate) to form a ureido ring. The chain is ATP-dependent dethiobiotin synthetase BioD from Vibrio vulnificus (strain CMCP6).